Consider the following 907-residue polypeptide: Alanine--tRNA ligase (907 aa).

4 residues coordinate Zn(2+): histidine 602, histidine 606, cysteine 706, and histidine 710.

Belongs to the class-II aminoacyl-tRNA synthetase family. Zn(2+) is required as a cofactor.

Its subcellular location is the cytoplasm. The catalysed reaction is tRNA(Ala) + L-alanine + ATP = L-alanyl-tRNA(Ala) + AMP + diphosphate. Catalyzes the attachment of alanine to tRNA(Ala) in a two-step reaction: alanine is first activated by ATP to form Ala-AMP and then transferred to the acceptor end of tRNA(Ala). Also edits incorrectly charged Ser-tRNA(Ala) and Gly-tRNA(Ala) via its editing domain. The protein is Alanine--tRNA ligase of Thermofilum pendens (strain DSM 2475 / Hrk 5).